Consider the following 269-residue polypeptide: Aminoglycoside (3'') (9) adenylyltransferase (269 aa).

The enzyme catalyses streptomycin + ATP = 3''-O-adenylylstreptomycin + diphosphate. It carries out the reaction spectinomycin + ATP = 9-O-adenylylspectinomycin + diphosphate. Functionally, mediates bacterial resistance to the antibiotic spectinomycin and probably also to streptomycin. The sequence is that of Aminoglycoside (3'') (9) adenylyltransferase from Rhizobium radiobacter (Agrobacterium tumefaciens).